A 439-amino-acid chain; its full sequence is DNA damage-inducible protein 1 (439 aa).

Residues 1–82 (MQITIAIQDT…LALHVRETQR (82 aa)) form the Ubiquitin-like domain. Residues 82–101 (RATAVPESQQGRPAAPPQQD) form a disordered region. Asp220 is an active-site residue. Residues 333–398 (QDEPTIEGPG…PAPRAPQARS (66 aa)) are disordered. Composition is skewed to low complexity over residues 364 to 375 (GQAGPSTAAQPG) and 383 to 398 (PASASAPAPRAPQARS). The UBA domain occupies 398-438 (SFPREHIEQLVALGADEQKAIRALEATDGNVEYAASLIFEG).

It belongs to the DDI1 family. In terms of assembly, binds ubiquitin and polyubiquitinated proteins.

Its subcellular location is the cytoplasm. Functionally, probable aspartic protease. May be involved in the regulation of exocytosis. Acts as a linker between the 19S proteasome and polyubiquitinated proteins via UBA domain interactions with ubiquitin for their subsequent degradation. Required for S-phase checkpoint control. The chain is DNA damage-inducible protein 1 (ddi-1) from Neurospora crassa (strain ATCC 24698 / 74-OR23-1A / CBS 708.71 / DSM 1257 / FGSC 987).